A 394-amino-acid chain; its full sequence is MEYNPIKKVVSGNYAAAYAALHARVQVVAAYPITPQTSIIEKIAEFIANGEADIQYIPVESEHSAMAACIGASATGARVFTATSAQGLALMHEMLHWAAGSRLPIVMVNVNRAMAPPWSVWDDQTDSLSQRDTGWMQFYAENNQEVYDGVLMAYKVAETVNIPTMIIESAFILSHTYEVVNMIPQELVDEFLPPRKPLYTLTDFENPIAVGALATPADYYEFRYKIAKAHEEAKKVIKSVGKEFGERFGRDYSKMIETGYIEDADFVFMGMGSLMGTVKEAVDLLRKEGYKVGYAKVRWFRPFPKEELLEIAESVKGIAVLDRNFSFGQEGILFTEAKGALYNTGVRPIMKDYIVGLGGRDFTVRDVKAIAEDMKKVVESGKLDKEIEWYHLKR.

Heterotetramer of one alpha, one beta, one delta and one gamma chain.

It catalyses the reaction 3-methyl-2-oxobutanoate + 2 oxidized [2Fe-2S]-[ferredoxin] + CoA = 2-methylpropanoyl-CoA + 2 reduced [2Fe-2S]-[ferredoxin] + CO2 + H(+). The sequence is that of Ketoisovalerate oxidoreductase subunit VorA (vorA) from Pyrococcus horikoshii (strain ATCC 700860 / DSM 12428 / JCM 9974 / NBRC 100139 / OT-3).